A 372-amino-acid chain; its full sequence is 4-hydroxy-3-methylbut-2-en-1-yl diphosphate synthase (flavodoxin) (372 aa).

[4Fe-4S] cluster is bound by residues C270, C273, C305, and E312.

This sequence belongs to the IspG family. Requires [4Fe-4S] cluster as cofactor.

The catalysed reaction is (2E)-4-hydroxy-3-methylbut-2-enyl diphosphate + oxidized [flavodoxin] + H2O + 2 H(+) = 2-C-methyl-D-erythritol 2,4-cyclic diphosphate + reduced [flavodoxin]. Its pathway is isoprenoid biosynthesis; isopentenyl diphosphate biosynthesis via DXP pathway; isopentenyl diphosphate from 1-deoxy-D-xylulose 5-phosphate: step 5/6. Its function is as follows. Converts 2C-methyl-D-erythritol 2,4-cyclodiphosphate (ME-2,4cPP) into 1-hydroxy-2-methyl-2-(E)-butenyl 4-diphosphate. In Alteromonas mediterranea (strain DSM 17117 / CIP 110805 / LMG 28347 / Deep ecotype), this protein is 4-hydroxy-3-methylbut-2-en-1-yl diphosphate synthase (flavodoxin).